The primary structure comprises 59 residues: Large ribosomal subunit protein uL30 (59 aa).

The protein belongs to the universal ribosomal protein uL30 family. In terms of assembly, part of the 50S ribosomal subunit.

This chain is Large ribosomal subunit protein uL30, found in Mycolicibacterium vanbaalenii (strain DSM 7251 / JCM 13017 / BCRC 16820 / KCTC 9966 / NRRL B-24157 / PYR-1) (Mycobacterium vanbaalenii).